A 143-amino-acid polypeptide reads, in one-letter code: Transcriptional regulator MraZ (143 aa).

SpoVT-AbrB domains are found at residues 5–47 (EYKH…SLKE) and 76–119 (ACEC…SEEN).

The protein belongs to the MraZ family. Forms oligomers.

The protein resides in the cytoplasm. It localises to the nucleoid. This is Transcriptional regulator MraZ from Caldicellulosiruptor saccharolyticus (strain ATCC 43494 / DSM 8903 / Tp8T 6331).